A 1456-amino-acid polypeptide reads, in one-letter code: Ig-like and fibronectin type-III domain-containing protein C27B7.7 (1456 aa).

An N-terminal signal peptide occupies residues 1–16 (MISLSLVLLLLFGVRC). Fibronectin type-III domains lie at 24–128 (NDDS…SINT) and 132–227 (IPKA…TNST). 5 N-linked (GlcNAc...) asparagine glycosylation sites follow: N64, N146, N164, N198, and N225. The Ig-like 1 domain maps to 236–322 (PDEEYTADPQ…DAGDSSKEVN (87 aa)). The cysteines at positions 254 and 308 are disulfide-linked. Residues 328–426 (PGSPPSEITL…VAMERDTQPI (99 aa)) enclose the Fibronectin type-III 3 domain. N-linked (GlcNAc...) asparagine glycosylation is found at N471, N497, and N517. Fibronectin type-III domains follow at residues 531-631 (APTQ…TLNG), 636-736 (PPDN…TAYS), and 737-846 (EVPI…WFRT). N-linked (GlcNAc...) asparagine glycans are attached at residues N658, N691, and N692. The region spanning 841–948 (PRWFRTGHGK…GSSSASVEIR (108 aa)) is the Ig-like 2 domain. C877 and C932 are disulfide-bonded. N-linked (GlcNAc...) asparagine glycosylation is found at N893, N898, N969, N1091, N1120, N1133, N1151, N1207, N1268, N1277, N1298, N1350, N1357, and N1382. The 96-residue stretch at 955-1050 (PPENIILTAY…SCISDVLYET (96 aa)) folds into the Fibronectin type-III 7 domain. 3 consecutive Fibronectin type-III domains span residues 1148–1234 (APTN…TPNG), 1236–1343 (PKTA…ISFD), and 1347–1438 (VIDN…SSPS). The segment at 1419–1456 (LGRESPPSEEIDLEFISSPSPTPIISGSRRKVIKEPPL) is disordered. The segment covering 1434–1445 (ISSPSPTPIISG) has biased composition (low complexity).

It is found in the secreted. The sequence is that of Ig-like and fibronectin type-III domain-containing protein C27B7.7 from Caenorhabditis elegans.